A 243-amino-acid chain; its full sequence is Small ribosomal subunit protein eS4 (243 aa).

Positions 43 to 105 (IPLLYIVRDY…TGEHYRVLPN (63 aa)) constitute an S4 RNA-binding domain.

It belongs to the eukaryotic ribosomal protein eS4 family. As to quaternary structure, part of the 30S ribosomal subunit.

In Pyrococcus furiosus (strain ATCC 43587 / DSM 3638 / JCM 8422 / Vc1), this protein is Small ribosomal subunit protein eS4.